Consider the following 118-residue polypeptide: Peptidyl-tRNA hydrolase (118 aa).

The protein belongs to the PTH2 family.

The protein localises to the cytoplasm. It catalyses the reaction an N-acyl-L-alpha-aminoacyl-tRNA + H2O = an N-acyl-L-amino acid + a tRNA + H(+). In terms of biological role, the natural substrate for this enzyme may be peptidyl-tRNAs which drop off the ribosome during protein synthesis. In Thermococcus sibiricus (strain DSM 12597 / MM 739), this protein is Peptidyl-tRNA hydrolase.